Consider the following 361-residue polypeptide: Cytochrome c peroxidase, mitochondrial (361 aa).

Residues Met1–Tyr41 constitute a mitochondrion transit peptide. Catalysis depends on His122, which acts as the Proton acceptor. His245 provides a ligand contact to heme b. Residue Trp261 is the Tryptophan radical intermediate of the active site.

Belongs to the peroxidase family. Cytochrome c peroxidase subfamily. Forms a one-to-one complex with cytochrome c. Heme b is required as a cofactor.

The protein resides in the mitochondrion matrix. It is found in the mitochondrion intermembrane space. It carries out the reaction 2 Fe(II)-[cytochrome c] + H2O2 + 2 H(+) = 2 Fe(III)-[cytochrome c] + 2 H2O. In terms of biological role, destroys radicals which are normally produced within the cells and which are toxic to biological systems. The sequence is that of Cytochrome c peroxidase, mitochondrial (ccp1) from Emericella nidulans (strain FGSC A4 / ATCC 38163 / CBS 112.46 / NRRL 194 / M139) (Aspergillus nidulans).